The chain runs to 325 residues: Foldase protein PrsA (325 aa).

The N-terminal stretch at 1-20 is a signal peptide; that stretch reads MKLMNKIIVPVTASALLLGA. Cysteine 21 is lipidated: N-palmitoyl cysteine. Cysteine 21 is lipidated: S-diacylglycerol cysteine. The region spanning 139-245 is the PpiC domain; that stretch reads ENSKKTSHIL…YGYHIIKADK (107 aa). Disordered regions lie at residues 159 to 200 and 303 to 325; these read EGLS…SAKK and PDKI…NSGS.

This sequence belongs to the PrsA family.

It is found in the cell membrane. It carries out the reaction [protein]-peptidylproline (omega=180) = [protein]-peptidylproline (omega=0). Its function is as follows. Plays a major role in protein secretion by helping the post-translocational extracellular folding of several secreted proteins. In Staphylococcus epidermidis (strain ATCC 35984 / DSM 28319 / BCRC 17069 / CCUG 31568 / BM 3577 / RP62A), this protein is Foldase protein PrsA.